A 461-amino-acid chain; its full sequence is uncharacterized protein (461 aa).

The next 13 helical transmembrane spans lie at 13 to 33 (GIIF…LPFE), 54 to 74 (ALHV…LGLV), 81 to 101 (VGFA…ATAL), 120 to 140 (GNLF…SMWM), 170 to 190 (VFVL…TLVG), 211 to 231 (YGLP…YIIF), 256 to 276 (FIIF…NPFI), 286 to 306 (IASF…STGV), 314 to 334 (SNTD…SAVL), 349 to 369 (FMID…FIIF), 377 to 397 (TASA…LGMP), 399 to 419 (IGLA…PVAT), and 439 to 459 (VGFL…YMFW).

The protein belongs to the SLC13A/DASS transporter (TC 2.A.47) family. NADC subfamily.

Its subcellular location is the cell membrane. This is an uncharacterized protein from Haemophilus influenzae (strain ATCC 51907 / DSM 11121 / KW20 / Rd).